The following is a 706-amino-acid chain: Zinc finger CCCH domain-containing protein 56 (706 aa).

2 ANK repeats span residues 83–113 (EQRT…ELNL) and 118–150 (DKST…DPNI). A compositionally biased stretch (low complexity) spans 211 to 221 (SSLLSLDSVSS). The tract at residues 211-235 (SSLLSLDSVSSPTKPHGTDVTFASE) is disordered. 2 C3H1-type zinc fingers span residues 302–324 (PCPD…HGVF) and 332–356 (QYRT…HANE). Disordered stretches follow at residues 396 to 427 (PSAA…QQNI), 545 to 616 (SPKN…QTHG), and 652 to 692 (QMLK…TRES). Polar residues-rich tracts occupy residues 397–427 (SAAQ…QQNI) and 545–560 (SPKN…QASS). The residue at position 568 (S568) is a Phosphoserine. Over residues 580 to 592 (SRSLSSRDFGSSL) the composition is skewed to low complexity. Composition is skewed to polar residues over residues 600 to 616 (DSGS…QTHG), 652 to 667 (QMLK…NRVV), and 677 to 686 (QGGSSVNPHN).

This is Zinc finger CCCH domain-containing protein 56 from Arabidopsis thaliana (Mouse-ear cress).